A 294-amino-acid polypeptide reads, in one-letter code: Phosphatidylserine decarboxylase proenzyme (294 aa).

Residues D92, H149, and S252 each act as charge relay system; for autoendoproteolytic cleavage activity in the active site. S252 acts as the Schiff-base intermediate with substrate; via pyruvic acid; for decarboxylase activity in catalysis. S252 is modified (pyruvic acid (Ser); by autocatalysis).

The protein belongs to the phosphatidylserine decarboxylase family. PSD-B subfamily. Prokaryotic type I sub-subfamily. In terms of assembly, heterodimer of a large membrane-associated beta subunit and a small pyruvoyl-containing alpha subunit. Pyruvate is required as a cofactor. Post-translationally, is synthesized initially as an inactive proenzyme. Formation of the active enzyme involves a self-maturation process in which the active site pyruvoyl group is generated from an internal serine residue via an autocatalytic post-translational modification. Two non-identical subunits are generated from the proenzyme in this reaction, and the pyruvate is formed at the N-terminus of the alpha chain, which is derived from the carboxyl end of the proenzyme. The autoendoproteolytic cleavage occurs by a canonical serine protease mechanism, in which the side chain hydroxyl group of the serine supplies its oxygen atom to form the C-terminus of the beta chain, while the remainder of the serine residue undergoes an oxidative deamination to produce ammonia and the pyruvoyl prosthetic group on the alpha chain. During this reaction, the Ser that is part of the protease active site of the proenzyme becomes the pyruvoyl prosthetic group, which constitutes an essential element of the active site of the mature decarboxylase.

It is found in the cell membrane. It catalyses the reaction a 1,2-diacyl-sn-glycero-3-phospho-L-serine + H(+) = a 1,2-diacyl-sn-glycero-3-phosphoethanolamine + CO2. It participates in phospholipid metabolism; phosphatidylethanolamine biosynthesis; phosphatidylethanolamine from CDP-diacylglycerol: step 2/2. Its function is as follows. Catalyzes the formation of phosphatidylethanolamine (PtdEtn) from phosphatidylserine (PtdSer). In Bordetella avium (strain 197N), this protein is Phosphatidylserine decarboxylase proenzyme.